Consider the following 156-residue polypeptide: Ribosomal RNA large subunit methyltransferase H (156 aa).

Residues Leu73, Gly104, and 123 to 128 (LSDLTL) each bind S-adenosyl-L-methionine.

It belongs to the RNA methyltransferase RlmH family. In terms of assembly, homodimer.

It is found in the cytoplasm. The catalysed reaction is pseudouridine(1915) in 23S rRNA + S-adenosyl-L-methionine = N(3)-methylpseudouridine(1915) in 23S rRNA + S-adenosyl-L-homocysteine + H(+). Its function is as follows. Specifically methylates the pseudouridine at position 1915 (m3Psi1915) in 23S rRNA. The polypeptide is Ribosomal RNA large subunit methyltransferase H (Leptothrix cholodnii (strain ATCC 51168 / LMG 8142 / SP-6) (Leptothrix discophora (strain SP-6))).